Consider the following 201-residue polypeptide: Translation initiation factor IF-3 (201 aa).

Residues 170 to 201 (TPKSASKKGHTPPKTQVEASKQANESAETEEE) form a disordered region. Residues 182 to 195 (PKTQVEASKQANES) show a composition bias toward polar residues.

This sequence belongs to the IF-3 family. In terms of assembly, monomer.

It localises to the cytoplasm. In terms of biological role, IF-3 binds to the 30S ribosomal subunit and shifts the equilibrium between 70S ribosomes and their 50S and 30S subunits in favor of the free subunits, thus enhancing the availability of 30S subunits on which protein synthesis initiation begins. In Porphyromonas gingivalis (strain ATCC BAA-308 / W83), this protein is Translation initiation factor IF-3.